The chain runs to 783 residues: Ras and Rab interactor 1 (783 aa).

Met-1 bears the N-acetylmethionine mark. A disordered region spans residues 1 to 53 (MESPGESGAGSPGAPSPSSFTTGHLAREKPAQDPLYDVPNASGGQAGGPQRPG). A phosphoserine mark is found at Ser-3 and Ser-16. A Phosphotyrosine; by ABL1 and ABL2 modification is found at Tyr-36. Residues 69–163 (WLQLQANAAA…ILLLPLQLPR (95 aa)) form the SH2 domain. Phosphoserine occurs at positions 210, 258, 333, and 337. Disordered stretches follow at residues 250–282 (STET…ERLP) and 295–342 (YRVP…HLGR). The span at 257 to 269 (LSPPAVPPPPVPV) shows a compositional bias: pro residues. The segment at 294–727 (GYRVPAGSGP…GSGQSEARSR (434 aa)) is ras and 14-3-3 protein binding region. The span at 317–334 (GSPSSSEEEGVPGSRGSP) shows a compositional bias: low complexity. Ser-351 is modified (phosphoserine; by PKD/PRKD1). The VPS9 domain maps to 456–598 (LAADGSLGRL…LSGLGQAHTL (143 aa)). Ser-609 and Ser-611 each carry phosphoserine. In terms of domain architecture, Ras-associating spans 624–706 (FQHLLRVAYQ…GYLVYRRAEW (83 aa)). An Omega-N-methylarginine modification is found at Arg-692. The disordered stretch occupies residues 709–783 (TQGAVTEEEG…EAEGSRAAEE (75 aa)). The span at 762-772 (QAQEGPAQPGE) shows a compositional bias: low complexity.

This sequence belongs to the RIN (Ras interaction/interference) family. Interacts with the GTP-bound form of Ras proteins (NRAS, HRAS and KRAS). This interaction prevents the association between RAF1 and Ras. Interacts with 14-3-3 proteins YWHAB, YWHAE and YWHAZ when phosphorylated on Ser-351. Interacts with the SH3 domain of ABL1 and ABL2. Interacts with RAB5A. The interaction with Ras is probably regulated and antagonized by the interaction with 14-3-3 proteins. The interaction with 14-3-3 proteins is regulated by phosphorylation on Ser-351. Post-translationally, phosphorylated on tyrosine residues by ABL1 and ABL2. Phosphorylation at Ser-351 by PRKD1 induces interaction with 14-3-3 proteins. As to expression, expressed in all tissues examined with high levels in brain, placenta and pancreas.

The protein localises to the cytoplasm. It localises to the membrane. The protein resides in the cytoskeleton. Functionally, ras effector protein, which may serve as an inhibitory modulator of neuronal plasticity in aversive memory formation. Can affect Ras signaling at different levels. First, by competing with RAF1 protein for binding to activated Ras. Second, by enhancing signaling from ABL1 and ABL2, which regulate cytoskeletal remodeling. Third, by activating RAB5A, possibly by functioning as a guanine nucleotide exchange factor (GEF) for RAB5A, by exchanging bound GDP for free GTP, and facilitating Ras-activated receptor endocytosis. The polypeptide is Ras and Rab interactor 1 (RIN1) (Homo sapiens (Human)).